The primary structure comprises 210 residues: DNA-directed RNA polymerase III subunit rpc31 (210 aa).

S103 is modified (phosphoserine). Positions 151–210 are disordered; it reads KDESSEAAHPNIEEEPDEGLEEEDEDFGDDDDNDYGENYFDNGEGDDYDDYDGDEGAIYE. Composition is skewed to acidic residues over residues 163–185 and 193–210; these read EEEP…DNDY and GEGD…AIYE.

This sequence belongs to the eukaryotic RPC7 RNA polymerase subunit family. As to quaternary structure, component of the RNA polymerase III (Pol III) complex.

It localises to the cytoplasm. The protein localises to the nucleus. Its function is as follows. DNA-dependent RNA polymerase catalyzes the transcription of DNA into RNA using the four ribonucleoside triphosphates as substrates. Specific peripheric component of RNA polymerase III which synthesizes small RNAs, such as 5S rRNA and tRNAs. The chain is DNA-directed RNA polymerase III subunit rpc31 (rpc31) from Schizosaccharomyces pombe (strain 972 / ATCC 24843) (Fission yeast).